Here is a 335-residue protein sequence, read N- to C-terminus: Fructose-1,6-bisphosphatase class 1 (335 aa).

Residues Glu92, Asp114, Leu116, and Asp117 each coordinate Mg(2+). Substrate-binding positions include 117–120, Asn209, and Lys275; that span reads DGSS. Glu281 contributes to the Mg(2+) binding site.

This sequence belongs to the FBPase class 1 family. As to quaternary structure, homotetramer. Mg(2+) serves as cofactor.

It is found in the cytoplasm. It catalyses the reaction beta-D-fructose 1,6-bisphosphate + H2O = beta-D-fructose 6-phosphate + phosphate. The protein operates within carbohydrate biosynthesis; gluconeogenesis. The protein is Fructose-1,6-bisphosphatase class 1 of Delftia acidovorans (strain DSM 14801 / SPH-1).